Here is a 303-residue protein sequence, read N- to C-terminus: Protein transport protein SEC13-2 (303 aa).

WD repeat units follow at residues 7 to 46 (AHEG…NSSS), 53 to 95 (GHEG…GKMQ), 102 to 143 (VHSA…IAST), 149 to 202 (AHKF…ETYV), 209 to 251 (GHKD…KKND), and 261 to 300 (KFEQ…KWEE).

It belongs to the WD repeat SEC13 family. The COPII coat is composed of at least 5 proteins: the SEC23/24 complex, the SEC13/31 complex, and the protein SAR1. Component of the nuclear pore complex (NPC). NPC constitutes the exclusive means of nucleocytoplasmic transport. NPCs allow the passive diffusion of ions and small molecules and the active, nuclear transport receptor-mediated bidirectional transport of macromolecules such as proteins, RNAs, ribonucleoparticles (RNPs), and ribosomal subunits across the nuclear envelope. Due to its 8-fold rotational symmetry, all subunits are present with 8 copies or multiples thereof.

It is found in the cytoplasmic vesicle. Its subcellular location is the COPII-coated vesicle membrane. The protein resides in the endoplasmic reticulum membrane. It localises to the nucleus. The protein localises to the nuclear pore complex. Component of the coat protein complex II (COPII) which promotes the formation of transport vesicles from the endoplasmic reticulum (ER). The coat has two main functions, the physical deformation of the endoplasmic reticulum membrane into vesicles and the selection of cargo molecules. It also functions as a component of the nuclear pore complex (NPC). NPC components, collectively referred to as nucleoporins (NUPs), can play the role of both NPC structural components and of docking or interaction partners for transiently associated nuclear transport factors. SEC13 is required for efficient mRNA export from the nucleus to the cytoplasm and for correct nuclear pore biogenesis and distribution. The polypeptide is Protein transport protein SEC13-2 (SEC132) (Candida glabrata (strain ATCC 2001 / BCRC 20586 / JCM 3761 / NBRC 0622 / NRRL Y-65 / CBS 138) (Yeast)).